Consider the following 297-residue polypeptide: L-threonate dehydrogenase (297 aa).

NAD(+)-binding positions include 3-31 (RNIGVIGLGAMGFGVAQSLLRAGFNVHAC) and T97. K173 is an active-site residue. K241 is a binding site for NAD(+).

Belongs to the HIBADH-related family. L-threonate dehydrogenase subfamily.

The catalysed reaction is L-threonate + NAD(+) = 2-dehydro-L-erythronate + NADH + H(+). Functionally, catalyzes oxidation of L-threonate to 2-oxo-tetronate. Can use either NAD(+) or NADP(+) as cosubstrate, with a preference for NAD(+). This Cupriavidus necator (strain ATCC 17699 / DSM 428 / KCTC 22496 / NCIMB 10442 / H16 / Stanier 337) (Ralstonia eutropha) protein is L-threonate dehydrogenase.